A 1434-amino-acid chain; its full sequence is DNA-directed RNA polymerase subunit beta' (1434 aa).

Zn(2+) is bound by residues Cys70, Cys72, Cys85, and Cys88. Mg(2+) is bound by residues Asp460, Asp462, and Asp464. Zn(2+) contacts are provided by Cys840, Cys915, Cys922, and Cys925.

This sequence belongs to the RNA polymerase beta' chain family. The RNAP catalytic core consists of 2 alpha, 1 beta, 1 beta' and 1 omega subunit. When a sigma factor is associated with the core the holoenzyme is formed, which can initiate transcription. Mg(2+) is required as a cofactor. It depends on Zn(2+) as a cofactor.

The enzyme catalyses RNA(n) + a ribonucleoside 5'-triphosphate = RNA(n+1) + diphosphate. DNA-dependent RNA polymerase catalyzes the transcription of DNA into RNA using the four ribonucleoside triphosphates as substrates. The chain is DNA-directed RNA polymerase subunit beta' from Aeromonas hydrophila subsp. hydrophila (strain ATCC 7966 / DSM 30187 / BCRC 13018 / CCUG 14551 / JCM 1027 / KCTC 2358 / NCIMB 9240 / NCTC 8049).